The following is a 1817-amino-acid chain: Breast cancer type 1 susceptibility protein homolog (1817 aa).

Methionine 1 is subject to N-acetylmethionine. The RING-type zinc-finger motif lies at 24–65 (CPICLELIKEPVSTQCDHIFCKFCMLKLLNQKKGPSQCPLCK). Residue lysine 109 forms a Glycyl lysine isopeptide (Lys-Gly) (interchain with G-Cter in SUMO2) linkage. Residue serine 114 is modified to Phosphoserine. Lysine 299 is covalently cross-linked (Glycyl lysine isopeptide (Lys-Gly) (interchain with G-Cter in SUMO2)). The segment at 305–346 (RSKQSGAAVSQQSRWADSKETCNGRPVPRTEGKADPNVDSLC) is disordered. Residues 308 to 319 (QSGAAVSQQSRW) show a composition bias toward polar residues. Positions 320 to 340 (ADSKETCNGRPVPRTEGKADP) are enriched in basic and acidic residues. Lysine 337 participates in a covalent cross-link: Glycyl lysine isopeptide (Lys-Gly) (interchain with G-Cter in SUMO2). At serine 393 the chain carries Phosphoserine. Lysine 457 participates in a covalent cross-link: Glycyl lysine isopeptide (Lys-Gly) (interchain with G-Cter in SUMO2). The Nuclear localization signal motif lies at 497–503 (KLKRKRS). Residues lysine 513 and lysine 578 each participate in a glycyl lysine isopeptide (Lys-Gly) (interchain with G-Cter in SUMO2) cross-link. Residues 640-652 (SEETKKNNSNQTP) show a composition bias toward polar residues. 4 disordered regions span residues 640–720 (SEET…SPER), 735–768 (NKELGDLVLGGEPSGKPTEPSEESTSVSLVPDTD), 874–907 (LVGARSVPSREPSPKVTSRGEQKERQGQEESEIS), and 959–982 (GISQNSHFRQSVSPLRSSIKTDNR). Basic and acidic residues predominate over residues 669–679 (ADAKKNEPNEH). 3 positions are modified to phosphoserine: serine 686, serine 706, and serine 717. A compositionally biased stretch (low complexity) spans 744–760 (GGEPSGKPTEPSEESTS). Residues 891–901 (SRGEQKERQGQ) show a composition bias toward basic and acidic residues. Residues 959-976 (GISQNSHFRQSVSPLRSS) show a composition bias toward polar residues. A Phosphoserine; by CHEK2 modification is found at serine 975. Residue lysine 1049 forms a Glycyl lysine isopeptide (Lys-Gly) (interchain with G-Cter in SUMO2) linkage. Residues 1146 to 1185 (LRRESSRSPSPVTHASKSRSLHRGSRKLEFSEESDSTEDE) form a disordered region. Phosphoserine is present on residues serine 1153 and serine 1155. Residues 1161–1170 (SKSRSLHRGS) show a composition bias toward basic residues. Residues 1176–1185 (SEESDSTEDE) show a composition bias toward acidic residues. Residues serine 1181 and serine 1242 each carry the phosphoserine modification. A disordered region spans residues 1259–1290 (SSQHSAALGSPANALSQDPDFNPPSKQRRHQA). Serine 1298, serine 1304, and serine 1344 each carry phosphoserine. Threonine 1351 is subject to Phosphothreonine. The interval 1354–1381 (RATMKDNLIKLQQEMAQLEAVLEQHGSQ) is interaction with PALB2. Disordered stretches follow at residues 1375–1486 (LEQH…QEEL) and 1498–1534 (PHNLTGRSCLPRQDLEGTPYPESGIRLVSSRDPDSES). Residues serine 1380, serine 1414, and serine 1482 each carry the phosphoserine modification. 2 stretches are compositionally biased toward polar residues: residues 1405–1426 (NRSGTAILTSKNINENPVSQNP) and 1473–1485 (RSLQNRNSTSQEE). 2 BRCT domains span residues 1588–1682 (PKER…EFEV) and 1701–1800 (SQEK…AYLV).

In terms of assembly, heterodimer with BARD1. Part of the BRCA1-associated genome surveillance complex (BASC), which contains BRCA1, MSH2, MSH6, MLH1, ATM, BLM, PMS2 and the MRE11-RAD50-NBN protein (MRN) complex. This association could be a dynamic process changing throughout the cell cycle and within subnuclear domains. Component of the BRCA1-A complex, at least composed of BRCA1, BARD1, UIMC1/RAP80, ABRAXAS1, BRCC3/BRCC36, BABAM2 and BABAM1/NBA1. Interacts (via the BRCT domains) with ABRAXAS1 (phosphorylated form); this is important for recruitment to sites of DNA damage. Can form a heterotetramer with two molecules of ABRAXAS1 (phosphorylated form). Component of the BRCA1-RBBP8 complex. Interacts (via the BRCT domains) with RBBP8 ('Ser-327' phosphorylated form); the interaction ubiquitinates RBBP8, regulates CHEK1 activation, and involves RBBP8 in BRCA1-dependent G2/M checkpoint control on DNA damage. Associates with RNA polymerase II holoenzyme. Interacts with SMC1A, NELFB, DCLRE1C, CLSPN. CHEK1, CHEK2, BAP1, BRCC3, UBXN1 and PCLAF. Interacts (via BRCT domains) with BRIP1 (phosphorylated form). Interacts with FANCD2 (ubiquitinated form). Interacts with H2AX (phosphorylated on 'Ser-140'). Interacts (via the BRCT domains) with ACACA (phosphorylated form); the interaction prevents dephosphorylation of ACACA. Part of a BRCA complex containing BRCA1, BRCA2 and PALB2. Interacts directly with PALB2; the interaction is essential for its function in HRR. Interacts directly with BRCA2; the interaction occurs only in the presence of PALB2 which serves as the bridging protein. Interacts (via the BRCT domains) with LMO4; the interaction represses the transcriptional activity of BRCA1. Interacts (via the BRCT domains) with CCAR2 (via N-terminus); the interaction represses the transcriptional activator activity of BRCA1. Interacts with EXD2. Interacts (via C-terminus) with DHX9; this interaction is direct and links BRCA1 to the RNA polymerase II holoenzyme. Interacts with DNA helicase ZGRF1; the interaction is increased following DNA damage induction. Phosphorylated in response to IR, UV, and various stimuli that cause checkpoint activation, probably by ATM or ATR. Phosphorylation at Ser-975 by CHEK2 regulates mitotic spindle assembly. Phosphorylation by AURKA regulates centrosomal microtubule nucleation. Post-translationally, autoubiquitinated, undergoes 'Lys-6'-linked polyubiquitination. 'Lys-6'-linked polyubiquitination does not promote degradation.

Its subcellular location is the nucleus. The protein resides in the chromosome. It localises to the cytoplasm. It carries out the reaction S-ubiquitinyl-[E2 ubiquitin-conjugating enzyme]-L-cysteine + [acceptor protein]-L-lysine = [E2 ubiquitin-conjugating enzyme]-L-cysteine + N(6)-ubiquitinyl-[acceptor protein]-L-lysine.. It functions in the pathway protein modification; protein ubiquitination. Its function is as follows. E3 ubiquitin-protein ligase that specifically mediates the formation of 'Lys-6'-linked polyubiquitin chains and plays a central role in DNA repair by facilitating cellular responses to DNA damage. It is unclear whether it also mediates the formation of other types of polyubiquitin chains. The BRCA1-BARD1 heterodimer coordinates a diverse range of cellular pathways such as DNA damage repair, ubiquitination and transcriptional regulation to maintain genomic stability. Regulates centrosomal microtubule nucleation. Required for appropriate cell cycle arrests after ionizing irradiation in both the S-phase and the G2 phase of the cell cycle. Required for FANCD2 targeting to sites of DNA damage. Inhibits lipid synthesis by binding to inactive phosphorylated ACACA and preventing its dephosphorylation. Contributes to homologous recombination repair (HRR) via its direct interaction with PALB2, fine-tunes recombinational repair partly through its modulatory role in the PALB2-dependent loading of BRCA2-RAD51 repair machinery at DNA breaks. Component of the BRCA1-RBBP8 complex which regulates CHEK1 activation and controls cell cycle G2/M checkpoints on DNA damage via BRCA1-mediated ubiquitination of RBBP8. Acts as a transcriptional activator. The polypeptide is Breast cancer type 1 susceptibility protein homolog (Brca1) (Rattus norvegicus (Rat)).